A 567-amino-acid chain; its full sequence is Glutamine--tRNA ligase (567 aa).

The 'HIGH' region motif lies at 47–57 (PEPNGYLHIGH). ATP contacts are provided by residues 48–50 (EPN) and 54–60 (HIGHAKS). Residues Asp-80 and Tyr-225 each coordinate L-glutamine. Residues Thr-244 and 274–275 (RL) each bind ATP. The 'KMSKS' region motif lies at 281–285 (ITSKR).

Belongs to the class-I aminoacyl-tRNA synthetase family. Monomer.

It localises to the cytoplasm. It carries out the reaction tRNA(Gln) + L-glutamine + ATP = L-glutaminyl-tRNA(Gln) + AMP + diphosphate. The protein is Glutamine--tRNA ligase of Pseudomonas putida (strain ATCC 47054 / DSM 6125 / CFBP 8728 / NCIMB 11950 / KT2440).